Here is a 587-residue protein sequence, read N- to C-terminus: Aspartate--tRNA ligase (587 aa).

Glutamate 174 contributes to the L-aspartate binding site. The aspartate stretch occupies residues 198-201 (QITK). An L-aspartate-binding site is contributed by arginine 220. ATP contacts are provided by residues 220 to 222 (RDE) and glutamine 229. Position 443 (histidine 443) interacts with L-aspartate. ATP is bound at residue glutamate 477. Residue arginine 484 coordinates L-aspartate. 529-532 (GLDR) lines the ATP pocket.

Belongs to the class-II aminoacyl-tRNA synthetase family. Type 1 subfamily. Homodimer.

The protein resides in the cytoplasm. It carries out the reaction tRNA(Asp) + L-aspartate + ATP = L-aspartyl-tRNA(Asp) + AMP + diphosphate. Its function is as follows. Catalyzes the attachment of L-aspartate to tRNA(Asp) in a two-step reaction: L-aspartate is first activated by ATP to form Asp-AMP and then transferred to the acceptor end of tRNA(Asp). The protein is Aspartate--tRNA ligase of Streptococcus pneumoniae (strain ATCC 700669 / Spain 23F-1).